Reading from the N-terminus, the 205-residue chain is High frequency lysogenization protein HflD homolog (205 aa).

It belongs to the HflD family.

It is found in the cytoplasm. Its subcellular location is the cell inner membrane. This is High frequency lysogenization protein HflD homolog from Vibrio vulnificus (strain CMCP6).